The chain runs to 100 residues: NAD(P)H-quinone oxidoreductase subunit 4L, chloroplastic (100 aa).

3 consecutive transmembrane segments (helical) span residues 1–21 (MLEHVLVLSAYLFSVGLYGLI), 31–51 (ICLELIFNAVNINFVTFSDFF), and 60–80 (IFAIFVIAIAAAEAAIGLAIL).

Belongs to the complex I subunit 4L family. As to quaternary structure, NDH is composed of at least 16 different subunits, 5 of which are encoded in the nucleus.

It is found in the plastid. The protein localises to the chloroplast thylakoid membrane. It catalyses the reaction a plastoquinone + NADH + (n+1) H(+)(in) = a plastoquinol + NAD(+) + n H(+)(out). It carries out the reaction a plastoquinone + NADPH + (n+1) H(+)(in) = a plastoquinol + NADP(+) + n H(+)(out). In terms of biological role, NDH shuttles electrons from NAD(P)H:plastoquinone, via FMN and iron-sulfur (Fe-S) centers, to quinones in the photosynthetic chain and possibly in a chloroplast respiratory chain. The immediate electron acceptor for the enzyme in this species is believed to be plastoquinone. Couples the redox reaction to proton translocation, and thus conserves the redox energy in a proton gradient. The protein is NAD(P)H-quinone oxidoreductase subunit 4L, chloroplastic of Trachelium caeruleum (Blue throatwort).